Here is a 283-residue protein sequence, read N- to C-terminus: Short-chain dehydrogenase anuB (283 aa).

NADP(+) is bound by residues T57, D78, N106, Y166, K170, V199, and T201. Y166 acts as the Proton acceptor in catalysis. Y166 (proton donor) is an active-site residue. The active-site Lowers pKa of active site Tyr is K170.

The protein belongs to the short-chain dehydrogenases/reductases (SDR) family.

The protein operates within secondary metabolite biosynthesis. Highly reducing polyketide synthase; part of the gene cluster that mediates the biosynthesis of annullatin D, an alkylated aromatic polyketide with a fused dihydrobenzofuran lactone ring system that exhibits potent agonistic activities toward the cannabinoid receptors. The annullatin backbone 2-hydroxymethyl-3-pentylphenol is assembled from one acetyl-CoA starter unit and 5 malonyl-CoA elongation units by cooperation of the highly reducing polyketide synthase anuA, the short-chain dehydrogenase anuB and the oxidoreductase anuC, before being hydroxylated at the C-5 alkyl chain by the cytochrome P450 monooxygenase anuE to form (8S)-annullatin E. The prenyltransferase anuH subsequently installs one isoprenyl group at the benzene ring to form (8S)-annullatin J. Enzymatic or nonenzymatic dihydro-benzofuran ring formation between the prenyl and the phenolic hydroxyl groups in (8S)-annullatin J results in two diastereomers (2S,9S)-annullatin H and compound 12. The intermediate (2S,9S)-annullatin H is then converted to (2S,9S)-annullatin D by the FAD-linked oxidoreductase anuG-catalyzed five-member lactone ring formation. The isomer 12 acts as a substrate for the short-chain dehydrogenase anuF and is oxidized to (2R)-annullatin F, which is subsequently acetylated by an acetyltransferase leading to (2R)-annullatin G formation. The remaining enzymes identified within the cluster, anuD, anuI and anuJ, seem not to be involved in annullatin biosynthesis. The sequence is that of Short-chain dehydrogenase anuB from Penicillium roqueforti (strain FM164).